Consider the following 185-residue polypeptide: Ribosome-recycling factor (185 aa).

The protein belongs to the RRF family.

It is found in the cytoplasm. In terms of biological role, responsible for the release of ribosomes from messenger RNA at the termination of protein biosynthesis. May increase the efficiency of translation by recycling ribosomes from one round of translation to another. This chain is Ribosome-recycling factor, found in Brevibacillus brevis (strain 47 / JCM 6285 / NBRC 100599).